We begin with the raw amino-acid sequence, 617 residues long: MDFSKLPKILDEDKESTFGYVHGVSGPVVTACDMAGAAMYELVRVGHSELVGEIIRLEGDMATIQVYEETSGVSVGDPVLRTGKPLSVELGPGIMGAIFDGIQRPLSDISSQTQSIYIPRGVNVSALSRDIKWDFTPCKNLRVGSHITGGDIYGIVSENSLIKHKIMLPPRNRGTVTYIAPPGNYDTSDVVLELEFEGVKEKFTMVQVWPVRQVRPVTEKLPANHPLLTGQRVLDALFPCVQGGTTAIPGAFGCGKTVISQSLSKYSNSDVIIYVGCGERGNEMSEVLRDFPELTMEVDGKVESIMKRTALVANTSNMPVAAREASIYTGITLSEYFRDMGYHVSMMADSTSRWAEALREISGRLAEMPADSGYPAYLGARLASFYERAGRVKCLGNPEREGSVSIVGAVSPPGGDFSDPVTSATLGIVQVFWGLDKKLAQRKHFPSVNWLISYSKYMRALDEYYDKHFTEFVPLRTKAKEILQEEEDLAEIVQLVGKASLAETDKITLEVAKLIKDDFLQQNGYTPYDRFCPFYKTVGMLSNMIAFYDMARRAVETTAQSDNKITWSIIREHMGDILYKLSSMKFKDPLKDGEAKIKSDYAQLLEDMQNAFRSLED.

Residue D2 is modified to N-acetylalanine. At T136 the chain carries Phosphothreonine. Residue 250 to 257 (GAFGCGKT) participates in ATP binding. The residue at position 384 (S384) is a Phosphoserine; by AMPK.

It belongs to the ATPase alpha/beta chains family. In terms of assembly, V-ATPase is a heteromultimeric enzyme made up of two complexes: the ATP-hydrolytic V1 complex and the proton translocation V0 complex. The V1 complex consists of three catalytic AB heterodimers that form a heterohexamer, three peripheral stalks each consisting of EG heterodimers, one central rotor including subunits D and F, and the regulatory subunits C and H. The proton translocation complex V0 consists of the proton transport subunit a, a ring of proteolipid subunits c9c'', rotary subunit d, subunits e and f, and the accessory subunits ATP6AP1/Ac45 and ATP6AP2/PRR. Interacts with the V0 complex V-ATPase subunit a4 ATP6V0A4. Interacts with WFS1. Interacts with alpha-crystallin B chain/CRYAB and with MTOR, forming a ternary complex. (Microbial infection) Interacts with Rabies virus protein M; this interaction promotes virion uncoating. Post-translationally, phosphorylation at Ser-384 by AMPK down-regulates its enzyme activity. In terms of tissue distribution, high expression in the skin.

The protein localises to the cytoplasm. It is found in the cytosol. Its subcellular location is the cytoplasmic vesicle. The protein resides in the secretory vesicle. It localises to the clathrin-coated vesicle membrane. The protein localises to the lysosome. It catalyses the reaction ATP + H2O + 4 H(+)(in) = ADP + phosphate + 5 H(+)(out). With respect to regulation, ATP hydrolysis occurs at the interface between the nucleotide-binding domains of subunits A and B. ATP hydrolysis triggers a conformational change in the subunits D and F, which induces a shift of subunit d. The c-ring is subsequently rotated and results in a continuous proton translocation across the membrane. In terms of biological role, catalytic subunit of the V1 complex of vacuolar(H+)-ATPase (V-ATPase), a multisubunit enzyme composed of a peripheral complex (V1) that hydrolyzes ATP and a membrane integral complex (V0) that translocates protons. V-ATPase is responsible for acidifying and maintaining the pH of intracellular compartments and in some cell types, is targeted to the plasma membrane, where it is responsible for acidifying the extracellular environment. In aerobic conditions, involved in intracellular iron homeostasis, thus triggering the activity of Fe(2+) prolyl hydroxylase (PHD) enzymes, and leading to HIF1A hydroxylation and subsequent proteasomal degradation. May play a role in neurite development and synaptic connectivity. (Microbial infection) Plays an important role in virion uncoating during Rabies virus replication after membrane fusion. Specifically, participates in the dissociation of incoming viral matrix M proteins uncoating through direct interaction. In Homo sapiens (Human), this protein is V-type proton ATPase catalytic subunit A (ATP6V1A).